Reading from the N-terminus, the 293-residue chain is Bifunctional protein FolD (293 aa).

NADP(+) contacts are provided by residues 165-167 (GRS), Ser-190, and Ile-231.

It belongs to the tetrahydrofolate dehydrogenase/cyclohydrolase family. Homodimer.

The catalysed reaction is (6R)-5,10-methylene-5,6,7,8-tetrahydrofolate + NADP(+) = (6R)-5,10-methenyltetrahydrofolate + NADPH. The enzyme catalyses (6R)-5,10-methenyltetrahydrofolate + H2O = (6R)-10-formyltetrahydrofolate + H(+). Its pathway is one-carbon metabolism; tetrahydrofolate interconversion. Catalyzes the oxidation of 5,10-methylenetetrahydrofolate to 5,10-methenyltetrahydrofolate and then the hydrolysis of 5,10-methenyltetrahydrofolate to 10-formyltetrahydrofolate. In Parasynechococcus marenigrum (strain WH8102), this protein is Bifunctional protein FolD.